The following is a 949-amino-acid chain: Translation initiation factor IF-2 (949 aa).

3 disordered regions span residues 46–82, 145–176, and 188–361; these read LTASRPAESGPEEVRVTTNIVRRRSRPSAAAEPEAEA, EPAVAQEASPAVTAAKPVPATPAAPPQPERAS, and IPIT…KTEL. Over residues 152 to 162 the composition is skewed to low complexity; that stretch reads ASPAVTAAKPV. Positions 163 to 172 are enriched in pro residues; it reads PATPAAPPQP. Low complexity predominate over residues 263-276; it reads PRDAAAPRPAGARP. Over residues 334–344 the composition is skewed to basic and acidic residues; it reads SREERQFDPFH. Positions 449–618 constitute a tr-type G domain; it reads ERPPVVTIMG…LLQADLMDLK (170 aa). The G1 stretch occupies residues 458–465; it reads GHVDHGKT. 458 to 465 lines the GTP pocket; that stretch reads GHVDHGKT. Residues 483-487 form a G2 region; sequence GITQH. The tract at residues 504-507 is G3; the sequence is DTPG. GTP-binding positions include 504–508 and 558–561; these read DTPGH and NKID. A G4 region spans residues 558–561; the sequence is NKID. Positions 594 to 596 are G5; sequence SAK.

The protein belongs to the TRAFAC class translation factor GTPase superfamily. Classic translation factor GTPase family. IF-2 subfamily.

Its subcellular location is the cytoplasm. One of the essential components for the initiation of protein synthesis. Protects formylmethionyl-tRNA from spontaneous hydrolysis and promotes its binding to the 30S ribosomal subunits. Also involved in the hydrolysis of GTP during the formation of the 70S ribosomal complex. This Trichlorobacter lovleyi (strain ATCC BAA-1151 / DSM 17278 / SZ) (Geobacter lovleyi) protein is Translation initiation factor IF-2.